The primary structure comprises 799 residues: Protein ADP-ribosyltransferase PARP3 (799 aa).

The segment covering 1–49 (MKVESRSHNVHHAHGEEEKVMTRKQKAESKAHEVEHSPKKAKVEDEKNG) has biased composition (basic and acidic residues). Residues 1-55 (MKVESRSHNVHHAHGEEEKVMTRKQKAESKAHEVEHSPKKAKVEDEKNGHTNGKS) are disordered. The PADR1 zinc-binding domain maps to 39-188 (KKAKVEDEKN…QRDLGLAIKP (150 aa)). An SAP domain is found at 71 to 105 (NEQLSLEQMKEILEANDLDSSGSDLEITRRCQDLL). The interval 108–152 (GALEKCMVCNGNMEFDGRRYGCRGFYSEWSSCTFSTREPPRKDEP) is zinc ribbon. Residues cysteine 113, cysteine 116, cysteine 129, and cysteine 139 each contribute to the Zn(2+) site. A disordered region spans residues 140–161 (TFSTREPPRKDEPIKLPDSVQN). Residues 145 to 154 (EPPRKDEPIK) are compositionally biased toward basic and acidic residues. A BRCT domain is found at 189-261 (FTGMMISLMG…EPQPLESYDL (73 aa)). The region spanning 309-409 (DGKIFEKDGI…KKFQKKPLKF (101 aa)) is the WGR domain. A PARP alpha-helical domain is found at 436–555 (HCKLEPMVAN…DITLASHLIG (120 aa)). One can recognise a PARP catalytic domain in the interval 564 to 795 (DPLSDTYKKL…VKYEEKDAVI (232 aa)).

Belongs to the ARTD/PARP family.

It localises to the nucleus. The catalysed reaction is L-aspartyl-[protein] + NAD(+) = 4-O-(ADP-D-ribosyl)-L-aspartyl-[protein] + nicotinamide. It carries out the reaction L-glutamyl-[protein] + NAD(+) = 5-O-(ADP-D-ribosyl)-L-glutamyl-[protein] + nicotinamide. Its function is as follows. Involved in the base excision repair (BER) pathway, by catalyzing the poly(ADP-ribosyl)ation of a limited number of acceptor proteins involved in chromatin architecture and in DNA metabolism. This modification follows DNA damages and appears as an obligatory step in a detection/signaling pathway leading to the reparation of DNA strand breaks. This chain is Protein ADP-ribosyltransferase PARP3 (PARP3), found in Medicago truncatula (Barrel medic).